We begin with the raw amino-acid sequence, 307 residues long: Elongation factor Ts (307 aa).

Residues 80 to 83 form an involved in Mg(2+) ion dislocation from EF-Tu region; it reads TDFV.

The protein belongs to the EF-Ts family.

It is found in the cytoplasm. In terms of biological role, associates with the EF-Tu.GDP complex and induces the exchange of GDP to GTP. It remains bound to the aminoacyl-tRNA.EF-Tu.GTP complex up to the GTP hydrolysis stage on the ribosome. This Methylobacterium nodulans (strain LMG 21967 / CNCM I-2342 / ORS 2060) protein is Elongation factor Ts.